We begin with the raw amino-acid sequence, 176 residues long: Ribosome rescue factor SmrB (176 aa).

The Smr domain maps to 98 to 173 (LDLHGLTQKQ…GTAALLVLVE (76 aa)).

This sequence belongs to the SmrB family. In terms of assembly, associates with collided ribosomes, but not with correctly translating polysomes.

Functionally, acts as a ribosome collision sensor. Detects stalled/collided disomes (pairs of ribosomes where the leading ribosome is stalled and a second ribosome has collided with it) and endonucleolytically cleaves mRNA at the 5' boundary of the stalled ribosome. Stalled/collided disomes form a new interface (primarily via the 30S subunits) that binds SmrB. Cleaved mRNA becomes available for tmRNA ligation, leading to ribosomal subunit dissociation and rescue of stalled ribosomes. The protein is Ribosome rescue factor SmrB of Yersinia enterocolitica serotype O:8 / biotype 1B (strain NCTC 13174 / 8081).